The chain runs to 301 residues: MFSHLPFDCVLLLLLLLLTRSSEVEYRAEVGQNAYLPCFYTPAAPGNLVPVCWGKGACPVFECGNVVLRTDERDVNYWTSRYWLNGDFRKGDVSLTIENVTLADSGIYCCRIQIPGIMNDEKFNLKLVIKPAKVTPAPTRQRDFTAAFPRMLTTRGHGPAETQTLGSLPDINLTQISTLANELRDSRLANDLRDSGATIRIGIYIGAGICAGLALALIFGALIFKWYSHSKEKIQNLSLISLANLPPSGLANAVAEGIRSEENIYTIEENVYEVEEPNEYYCYVSSRQQPSQPLGCRFAMP.

The N-terminal stretch at 1-21 (MFSHLPFDCVLLLLLLLLTRS) is a signal peptide. Positions 22 to 124 (SEVEYRAEVG…PGIMNDEKFN (103 aa)) constitute an Ig-like V-type domain. The Extracellular portion of the chain corresponds to 22–202 (SEVEYRAEVG…RDSGATIRIG (181 aa)). Disulfide bonds link C38–C110, C52–C63, and C58–C109. Residue R111 coordinates a 1,2-diacyl-sn-glycero-3-phospho-L-serine. Ca(2+) is bound at residue G116. M118 serves as a coordination point for a 1,2-diacyl-sn-glycero-3-phospho-L-serine. N119 serves as a coordination point for Ca(2+). T145 carries an O-linked (GalNAc...) threonine glycan. N172 carries N-linked (GlcNAc...) asparagine glycosylation. The helical transmembrane segment at 203–223 (IYIGAGICAGLALALIFGALI) threads the bilayer. The Cytoplasmic portion of the chain corresponds to 224-301 (FKWYSHSKEK…QPLGCRFAMP (78 aa)). Phosphotyrosine; by ITK is present on Y265. A lipid anchor (S-palmitoyl cysteine) is attached at C296.

Belongs to the immunoglobulin superfamily. TIM family. In terms of assembly, interacts with HMGB1; impairs HMGB1 binding to B-DNA and likely HMGB1-mediated innate immune response. Interacts with BAG6. Interacts (phosphorylated) with PIK3R1 and PIK3R2. Interacts (not dependent on its phosphorylation status) with FYN. Interacts (in basal state T-cells) with VAV1; AKT1/2, LCP2, ZAP70, SYK, PIK3R1, FYN, SH3BP2 and SH2D2A. Interacts (in activated T-cells) with LCK and PLCG. Interacts with ILF3; this interaction promotes ILF3 ubiquitination and degradation. Post-translationally, O-glycosylated with core 1 or possibly core 8 glycans. Phosphorylated on tyrosine residues; modestly increased after TCR/CD28 stimulation. Can be phosphorylated in the cytoplasmic domain by FYN. Phosphorylation at Tyr-265 is increased by stimulation with ligand LGALS9. In terms of processing, palmitoylated by ZDHHC9 at Cys-296; palmitoylation stabilizes HAVCR2 by preventing binding to E3 ubiquitin ligase SYVN1, thereby suppressing its polyubiquitination and degradation. Post-translationally, ubiquitinated by SYVN1, leading to polyubiquitination and proteasomal degradation. As to expression, expressed in T-helper type 1 (Th1) lymphocytes. Expressed on regulatory T (Treg) cells after TCR stimulation. Expressed in dendritic cells and natural killer (NK) cells. Expressed in epithelial tissues. Expression is increased on CD4+ and CD8+ T-cells in chronic hepatitis C virus (HCV) infection. In progressive HIV-1 infection, expression is up-regulated on HIV-1-specific CD8 T-cells.

It is found in the cell membrane. The protein localises to the cell junction. Its function is as follows. Cell surface receptor implicated in modulating innate and adaptive immune responses. Generally accepted to have an inhibiting function. Reports on stimulating functions suggest that the activity may be influenced by the cellular context and/or the respective ligand. Regulates macrophage activation. Inhibits T-helper type 1 lymphocyte (Th1)-mediated auto- and alloimmune responses and promotes immunological tolerance. In CD8+ cells attenuates TCR-induced signaling, specifically by blocking NF-kappaB and NFAT promoter activities resulting in the loss of IL-2 secretion. The function may implicate its association with LCK proposed to impair phosphorylation of TCR subunits, and/or LGALS9-dependent recruitment of PTPRC to the immunological synapse. In contrast, shown to activate TCR-induced signaling in T-cells probably implicating ZAP70, LCP2, LCK and FYN. Expressed on Treg cells can inhibit Th17 cell responses. Receptor for LGALS9. Binding to LGALS9 is believed to result in suppression of T-cell responses; the resulting apoptosis of antigen-specific cells may implicate HAVCR2 phosphorylation and disruption of its association with BAG6. Binding to LGALS9 is proposed to be involved in innate immune response to intracellular pathogens. Expressed on Th1 cells interacts with LGALS9 expressed on Mycobacterium tuberculosis-infected macrophages to stimulate antibactericidal activity including IL-1 beta secretion and to restrict intracellular bacterial growth. However, the function as receptor for LGALS9 has been challenged. Also reported to enhance CD8+ T-cell responses to an acute infection such as by Listeria monocytogenes. Receptor for phosphatidylserine (PtSer); PtSer-binding is calcium-dependent. May recognize PtSer on apoptotic cells leading to their phagocytosis. Mediates the engulfment of apoptotic cells by dendritic cells. Expressed on T-cells, promotes conjugation but not engulfment of apoptotic cells. Expressed on dendritic cells (DCs) positively regulates innate immune response and in synergy with Toll-like receptors promotes secretion of TNF-alpha. In tumor-imfiltrating DCs suppresses nucleic acid-mediated innate immune repsonse by interaction with HMGB1 and interfering with nucleic acid-sensing and trafficking of nucleid acids to endosomes. Expressed on natural killer (NK) cells acts as a coreceptor to enhance IFN-gamma production in response to LGALS9. In contrast, shown to suppress NK cell-mediated cytotoxicity. Negatively regulates NK cell function in LPS-induced endotoxic shock. This Homo sapiens (Human) protein is Hepatitis A virus cellular receptor 2 (HAVCR2).